The primary structure comprises 377 residues: F-box protein At1g11810 (377 aa).

The 47-residue stretch at 2–48 folds into the F-box domain; that stretch reads TTTMSTLPVVLVDEILARVPITSLRSLRSTCKKWEASSKTNLVGGKA.

This chain is F-box protein At1g11810, found in Arabidopsis thaliana (Mouse-ear cress).